The following is a 148-amino-acid chain: uncharacterized protein (148 aa).

Residues 7–29 (MLILMSLVKIVLTCLPTGVIEWL) traverse the membrane as a helical segment.

It is found in the membrane. This is an uncharacterized protein from Bacillus subtilis (strain 168).